The chain runs to 142 residues: ATP synthase epsilon chain (142 aa).

Belongs to the ATPase epsilon chain family. F-type ATPases have 2 components, CF(1) - the catalytic core - and CF(0) - the membrane proton channel. CF(1) has five subunits: alpha(3), beta(3), gamma(1), delta(1), epsilon(1). CF(0) has three main subunits: a, b and c.

It is found in the cell inner membrane. In terms of biological role, produces ATP from ADP in the presence of a proton gradient across the membrane. The chain is ATP synthase epsilon chain from Shewanella oneidensis (strain ATCC 700550 / JCM 31522 / CIP 106686 / LMG 19005 / NCIMB 14063 / MR-1).